The primary structure comprises 301 residues: uncharacterized protein (301 aa).

This sequence belongs to the asfivirus E301R family. In terms of assembly, interacts with host IRF3.

Functionally, plays a role in the inhibition of host innate immune system by acting as a negatively regulator of type I interferon production. Mechanistically, interacts with and prevents host IRF3 nuclear localization to inhibit its transcriptional activity. This is an uncharacterized protein from Ornithodoros (relapsing fever ticks).